The sequence spans 80 residues: Small ribosomal subunit protein uS17 (80 aa).

It belongs to the universal ribosomal protein uS17 family. In terms of assembly, part of the 30S ribosomal subunit.

In terms of biological role, one of the primary rRNA binding proteins, it binds specifically to the 5'-end of 16S ribosomal RNA. This chain is Small ribosomal subunit protein uS17, found in Beijerinckia indica subsp. indica (strain ATCC 9039 / DSM 1715 / NCIMB 8712).